We begin with the raw amino-acid sequence, 448 residues long: Chromogranin-A (448 aa).

The first 18 residues, 1–18 (MRSAVVLALLLCAGQVIA), serve as a signal peptide directing secretion. Cysteine 35 and cysteine 56 are joined by a disulfide. The interval 116–251 (LKEVTEEALS…AFNPHPSLSY (136 aa)) is disordered. Composition is skewed to basic and acidic residues over residues 129–139 (AEARGDSKEVE) and 158–175 (QESRVEDAQAPGEEKEAI). At serine 197 the chain carries Phosphoserine. Residues 205–222 (VDREKGLGAERGQQAKRE) show a composition bias toward basic and acidic residues. The span at 223-238 (EEEDEAGEKADAEEEG) shows a compositional bias: acidic residues. 2 positions are modified to phosphoserine: serine 258 and serine 288. The disordered stretch occupies residues 263-429 (LVVDGARKTG…PEDQELESLS (167 aa)). Glycine 308 carries the glycine amide modification. The segment covering 310–350 (KSRELEQEKEQERLSKEWEDAKRWSKMDQLAKELTAEKRLE) has biased composition (basic and acidic residues). Phosphoserine is present on residues serine 311, serine 324, and serine 362. Methionine 363 bears the Methionine sulfoxide mark. Phosphoserine occurs at positions 389, 393, 415, and 429. The segment covering 405-422 (YPEEKKEEEGSANRRPED) has biased composition (basic and acidic residues). A glycan (O-linked (Xyl...) (chondroitin sulfate) serine) is linked at serine 415.

The protein belongs to the chromogranin/secretogranin protein family. Self-interacts; self-assembly is promoted in vitro by chondroitin sulfate attachment which occurs at mildly acidic pH conditions. Interacts with SCG3. Interacts with ITPR1 in the secretory granules. Post-translationally, O-glycosylated; contains chondroitin sulfate (CS). CS attachment is pH-dependent, being observed at mildly acidic conditions of pH 5 but not at neutral pH, and promotes self-assembly in vitro. In terms of tissue distribution, highly expressed in adrenal medulla and pituitary gland. Weaker expression detected in cerebrum, cerebellum, spinal cord, liver, thyroid gland, striated muscle, lung, spleen, kidney, parotid gland, and sublingual gland.

It localises to the secreted. It is found in the cytoplasmic vesicle. The protein localises to the secretory vesicle. Its subcellular location is the neuronal dense core vesicle. Functionally, strongly inhibits glucose induced insulin release from the pancreas. Inhibits catecholamine release from chromaffin cells and noradrenergic neurons by acting as a non-competitive nicotinic cholinergic antagonist. Can induce mast cell migration, degranulation and production of cytokines and chemokines. Its function is as follows. Regulates granule biogenesis in endocrine cells by up-regulating the transcription of protease nexin 1 (SERPINE2) via a cAMP-PKA-SP1 pathway. This leads to inhibition of granule protein degradation in the Golgi complex which in turn promotes granule formation. The protein is Chromogranin-A (CHGA) of Equus caballus (Horse).